Consider the following 130-residue polypeptide: Large ribosomal subunit protein bL19 (130 aa).

The protein belongs to the bacterial ribosomal protein bL19 family.

This protein is located at the 30S-50S ribosomal subunit interface and may play a role in the structure and function of the aminoacyl-tRNA binding site. This is Large ribosomal subunit protein bL19 from Burkholderia ambifaria (strain ATCC BAA-244 / DSM 16087 / CCUG 44356 / LMG 19182 / AMMD) (Burkholderia cepacia (strain AMMD)).